The primary structure comprises 101 residues: Nucleoid-associated protein Cla_0113 (101 aa).

Belongs to the YbaB/EbfC family. As to quaternary structure, homodimer.

Its subcellular location is the cytoplasm. It localises to the nucleoid. In terms of biological role, binds to DNA and alters its conformation. May be involved in regulation of gene expression, nucleoid organization and DNA protection. This chain is Nucleoid-associated protein Cla_0113, found in Campylobacter lari (strain RM2100 / D67 / ATCC BAA-1060).